A 239-amino-acid polypeptide reads, in one-letter code: Probable transcriptional regulatory protein CD630_07950 (239 aa).

Belongs to the TACO1 family.

The protein resides in the cytoplasm. The protein is Probable transcriptional regulatory protein CD630_07950 of Clostridioides difficile (strain 630) (Peptoclostridium difficile).